A 301-amino-acid chain; its full sequence is Protein FdhE homolog (301 aa).

It belongs to the FdhE family.

It localises to the cytoplasm. Its function is as follows. Necessary for formate dehydrogenase activity. This Erwinia tasmaniensis (strain DSM 17950 / CFBP 7177 / CIP 109463 / NCPPB 4357 / Et1/99) protein is Protein FdhE homolog.